The primary structure comprises 191 residues: Probable chemoreceptor glutamine deamidase CheD (191 aa).

This sequence belongs to the CheD family.

The enzyme catalyses L-glutaminyl-[protein] + H2O = L-glutamyl-[protein] + NH4(+). Probably deamidates glutamine residues to glutamate on methyl-accepting chemotaxis receptors (MCPs), playing an important role in chemotaxis. The protein is Probable chemoreceptor glutamine deamidase CheD of Hydrogenovibrio crunogenus (strain DSM 25203 / XCL-2) (Thiomicrospira crunogena).